A 578-amino-acid polypeptide reads, in one-letter code: Proteasome-associated ATPase (578 aa).

Positions Thr8–Gln84 form a coiled coil. Gly267–Leu272 is an ATP binding site. The interval Tyr577 to Leu578 is docks into pockets in the proteasome alpha-ring.

The protein belongs to the AAA ATPase family. Homohexamer. Assembles into a hexameric ring structure that caps the 20S proteasome core. Strongly interacts with the prokaryotic ubiquitin-like protein Pup through a hydrophobic interface; the interacting region of ARC lies in its N-terminal coiled-coil domain. There is one Pup binding site per ARC hexamer ring. Upon ATP-binding, the C-terminus of ARC interacts with the alpha-rings of the proteasome core, possibly by binding to the intersubunit pockets.

Its pathway is protein degradation; proteasomal Pup-dependent pathway. Its function is as follows. ATPase which is responsible for recognizing, binding, unfolding and translocation of pupylated proteins into the bacterial 20S proteasome core particle. May be essential for opening the gate of the 20S proteasome via an interaction with its C-terminus, thereby allowing substrate entry and access to the site of proteolysis. Thus, the C-termini of the proteasomal ATPase may function like a 'key in a lock' to induce gate opening and therefore regulate proteolysis. In Kribbella flavida (strain DSM 17836 / JCM 10339 / NBRC 14399), this protein is Proteasome-associated ATPase.